Reading from the N-terminus, the 706-residue chain is Ribosomal RNA large subunit methyltransferase K/L (706 aa).

One can recognise a THUMP domain in the interval 43-154 (LMYQSLLWSR…RDMASVALDL (112 aa)).

It belongs to the methyltransferase superfamily. RlmKL family.

The protein localises to the cytoplasm. The enzyme catalyses guanosine(2445) in 23S rRNA + S-adenosyl-L-methionine = N(2)-methylguanosine(2445) in 23S rRNA + S-adenosyl-L-homocysteine + H(+). It carries out the reaction guanosine(2069) in 23S rRNA + S-adenosyl-L-methionine = N(2)-methylguanosine(2069) in 23S rRNA + S-adenosyl-L-homocysteine + H(+). Functionally, specifically methylates the guanine in position 2445 (m2G2445) and the guanine in position 2069 (m7G2069) of 23S rRNA. The sequence is that of Ribosomal RNA large subunit methyltransferase K/L from Yersinia enterocolitica serotype O:8 / biotype 1B (strain NCTC 13174 / 8081).